The following is a 173-amino-acid chain: Alpha-crystallin A chain (173 aa).

At Met-1 the chain carries N-acetylmethionine. The segment at 1 to 63 is required for complex formation with BFSP1 and BFSP2; the sequence is MDVTIQHPWF…RTVLDSGISE (63 aa). Gln-6 is modified (deamidated glutamine; partial). Ser-45 carries the phosphoserine modification. A Deamidated glutamine; partial modification is found at Gln-50. Residues 52 to 162 form the sHSP domain; that stretch reads LFRTVLDSGI…GHSERAIPVS (111 aa). An N6-acetyllysine modification is found at Lys-70. Gln-90 carries the post-translational modification Deamidated glutamine; partial. The residue at position 99 (Lys-99) is an N6-acetyllysine. His-100 lines the Zn(2+) pocket. Asn-101 carries the deamidated asparagine; partial modification. Residues Glu-102 and His-107 each contribute to the Zn(2+) site. At Ser-122 the chain carries Phosphoserine. Residue Asn-123 is modified to Deamidated asparagine; partial. Positions 145-173 are disordered; that stretch reads KVQSGLDAGHSERAIPVSREEKPSSAPSS. At Gln-147 the chain carries Deamidated glutamine; partial. Basic and acidic residues predominate over residues 153 to 167; it reads GHSERAIPVSREEKP. Residue His-154 coordinates Zn(2+). Ser-162 is a glycosylation site (O-linked (GlcNAc) serine).

This sequence belongs to the small heat shock protein (HSP20) family. Heteromer composed of three CRYAA and one CRYAB subunits. Inter-subunit bridging via zinc ions enhances stability, which is crucial as there is no protein turn over in the lens. Can also form homodimers and homotetramers (dimers of dimers) which serve as the building blocks of homooligomers. Within homooligomers, the zinc-binding motif is created from residues of 3 different molecules. His-100 and Glu-102 from one molecule are ligands of the zinc ion, and His-107 and His-154 residues from additional molecules complete the site with tetrahedral coordination geometry. Part of a complex required for lens intermediate filament formation composed of BFSP1, BFSP2 and CRYAA. Acetylation at Lys-70 may increase chaperone activity. In terms of processing, undergoes age-dependent proteolytical cleavage at the C-terminus.

Its subcellular location is the cytoplasm. It is found in the nucleus. In terms of biological role, contributes to the transparency and refractive index of the lens. Acts as a chaperone, preventing aggregation of various proteins under a wide range of stress conditions. Required for the correct formation of lens intermediate filaments as part of a complex composed of BFSP1, BFSP2 and CRYAA. The protein is Alpha-crystallin A chain (CRYAA) of Cavia porcellus (Guinea pig).